A 127-amino-acid polypeptide reads, in one-letter code: Aspartate 1-decarboxylase (127 aa).

The active-site Schiff-base intermediate with substrate; via pyruvic acid is Ser-25. Pyruvic acid (Ser) is present on Ser-25. Thr-57 provides a ligand contact to substrate. Tyr-58 acts as the Proton donor in catalysis. 73–75 (GSA) contributes to the substrate binding site.

It belongs to the PanD family. Heterooctamer of four alpha and four beta subunits. Requires pyruvate as cofactor. Post-translationally, is synthesized initially as an inactive proenzyme, which is activated by self-cleavage at a specific serine bond to produce a beta-subunit with a hydroxyl group at its C-terminus and an alpha-subunit with a pyruvoyl group at its N-terminus.

Its subcellular location is the cytoplasm. The catalysed reaction is L-aspartate + H(+) = beta-alanine + CO2. It functions in the pathway cofactor biosynthesis; (R)-pantothenate biosynthesis; beta-alanine from L-aspartate: step 1/1. Its function is as follows. Catalyzes the pyruvoyl-dependent decarboxylation of aspartate to produce beta-alanine. This chain is Aspartate 1-decarboxylase, found in Dechloromonas aromatica (strain RCB).